Here is a 221-residue protein sequence, read N- to C-terminus: Tetraspanin-2 (221 aa).

Residues 1 to 13 (MGRFRGGLRCIKY) are Cytoplasmic-facing. The chain crosses the membrane as a helical span at residues 14–34 (LLLGFNLLFWLAGSAVIAFGL). At 35–54 (WFRFGGTMKDLSSEDKSPEY) the chain is on the extracellular side. Residues 55–75 (FYVGLYVLVGAGALMMTVGFF) form a helical membrane-spanning segment. The Cytoplasmic segment spans residues 76–90 (GCCGAMRESQCVLGS). The helical transmembrane segment at 91–111 (FFTCLLVIFAAEVTTGVFAFI) threads the bilayer. Residues 112 to 188 (GKDVAIRHVQ…ETVISAKLQL (77 aa)) lie on the Extracellular side of the membrane. A glycan (N-linked (GlcNAc...) asparagine) is linked at Asn139. The chain crosses the membrane as a helical span at residues 189–209 (IGIVGIGIAGLTIFGMIFSMV). The Cytoplasmic portion of the chain corresponds to 210–221 (LCCAIRNSRDVI).

This sequence belongs to the tetraspanin (TM4SF) family.

Its subcellular location is the membrane. Its function is as follows. May play a role in signalling in oligodendrocytes in the early stages of their terminal differentiation into myelin-forming glia and may also function in stabilizing the mature sheath. The sequence is that of Tetraspanin-2 (Tspan2) from Mus musculus (Mouse).